The sequence spans 351 residues: Succinylglutamate desuccinylase (351 aa).

3 residues coordinate Zn(2+): His73, Glu76, and His168. Glu231 is an active-site residue.

This sequence belongs to the AspA/AstE family. Succinylglutamate desuccinylase subfamily. The cofactor is Zn(2+).

It carries out the reaction N-succinyl-L-glutamate + H2O = L-glutamate + succinate. It participates in amino-acid degradation; L-arginine degradation via AST pathway; L-glutamate and succinate from L-arginine: step 5/5. Transforms N(2)-succinylglutamate into succinate and glutamate. The chain is Succinylglutamate desuccinylase from Burkholderia lata (strain ATCC 17760 / DSM 23089 / LMG 22485 / NCIMB 9086 / R18194 / 383).